Here is a 238-residue protein sequence, read N- to C-terminus: 2,3,4,5-tetrahydropyridine-2,6-dicarboxylate N-acetyltransferase (238 aa).

This sequence belongs to the transferase hexapeptide repeat family. DapH subfamily.

It carries out the reaction (S)-2,3,4,5-tetrahydrodipicolinate + acetyl-CoA + H2O = L-2-acetamido-6-oxoheptanedioate + CoA. It participates in amino-acid biosynthesis; L-lysine biosynthesis via DAP pathway; LL-2,6-diaminopimelate from (S)-tetrahydrodipicolinate (acetylase route): step 1/3. Functionally, catalyzes the transfer of an acetyl group from acetyl-CoA to tetrahydrodipicolinate. In Clostridioides difficile (strain 630) (Peptoclostridium difficile), this protein is 2,3,4,5-tetrahydropyridine-2,6-dicarboxylate N-acetyltransferase.